The chain runs to 385 residues: 8-amino-7-oxononanoate synthase (385 aa).

R21 serves as a coordination point for substrate. Pyridoxal 5'-phosphate is bound at residue 108–109 (GF). A substrate-binding site is contributed by H133. Pyridoxal 5'-phosphate-binding residues include S179, H207, and T233. K236 carries the post-translational modification N6-(pyridoxal phosphate)lysine. T352 contacts substrate.

Belongs to the class-II pyridoxal-phosphate-dependent aminotransferase family. BioF subfamily. Homodimer. It depends on pyridoxal 5'-phosphate as a cofactor.

It carries out the reaction 6-carboxyhexanoyl-[ACP] + L-alanine + H(+) = (8S)-8-amino-7-oxononanoate + holo-[ACP] + CO2. The protein operates within cofactor biosynthesis; biotin biosynthesis. Catalyzes the decarboxylative condensation of pimeloyl-[acyl-carrier protein] and L-alanine to produce 8-amino-7-oxononanoate (AON), [acyl-carrier protein], and carbon dioxide. The chain is 8-amino-7-oxononanoate synthase from Pseudescherichia vulneris (Escherichia vulneris).